The chain runs to 435 residues: MGKQEVKTRQGERVAIVAGLRTPFARQSTEFSQVPAVDLGKMVVSDLLARTDIDPKLIEQVVFGQVVQMPEAPNIAREIVLGTGMNIHTDAYSVTRACATSFQSAVNVAESIMAGAIDIGIAGGADSSSVLPIGVSKKLAASLLALSKTKTLGQKLKVLSGLGLKDLMPVPPAVAEYSTGLSMGQTAEQMAKTHGITRAEQDALAHRSHTLASQAWRDGKIAGEVMTAFPEPYKKWIAEDNNIRHDSTLEGYAKLRPAFDRQYGSVTAANSTPLTDGAAAVLLMREGRAKELGMEILGYIRGYAFSAIGVESDMLMGPSYATSKVLQSTGLALSDLTLIDMHEAFAAQALANVKMFASDKFAQENLGRSKAMGEIDMDKFNVLGGSIAYGHPFAATGARMMTQTLRELKRRGGGLALNTACAAGGLGAAMILEVE.

The Acyl-thioester intermediate role is filled by C98. Residues H391 and C421 each act as proton acceptor in the active site.

This sequence belongs to the thiolase-like superfamily. Thiolase family. Heterotetramer of two alpha chains (FadJ) and two beta chains (FadI).

It is found in the cytoplasm. The catalysed reaction is an acyl-CoA + acetyl-CoA = a 3-oxoacyl-CoA + CoA. It functions in the pathway lipid metabolism; fatty acid beta-oxidation. Catalyzes the final step of fatty acid oxidation in which acetyl-CoA is released and the CoA ester of a fatty acid two carbons shorter is formed. The sequence is that of 3-ketoacyl-CoA thiolase from Vibrio vulnificus (strain CMCP6).